Here is a 530-residue protein sequence, read N- to C-terminus: T-complex protein 1 subunit zeta-2 (530 aa).

This sequence belongs to the TCP-1 chaperonin family. As to quaternary structure, component of the chaperonin-containing T-complex (TRiC), a heterooligomeric complex of about 850 to 900 kDa that forms two stacked rings, 12 to 16 nm in diameter. Testis-specific.

Its subcellular location is the cytoplasm. Its function is as follows. Component of the chaperonin-containing T-complex (TRiC), a molecular chaperone complex that assists the folding of proteins upon ATP hydrolysis. The chain is T-complex protein 1 subunit zeta-2 (CCT6B) from Homo sapiens (Human).